The sequence spans 346 residues: Biotin synthase (346 aa).

The Radical SAM core domain maps to 38 to 256 (RQVQVSTLLS…IAIARIMMPT (219 aa)). Residues C53, C57, and C60 each coordinate [4Fe-4S] cluster. C97, C128, C188, and R260 together coordinate [2Fe-2S] cluster.

Belongs to the radical SAM superfamily. Biotin synthase family. In terms of assembly, homodimer. [4Fe-4S] cluster is required as a cofactor. The cofactor is [2Fe-2S] cluster.

It catalyses the reaction (4R,5S)-dethiobiotin + (sulfur carrier)-SH + 2 reduced [2Fe-2S]-[ferredoxin] + 2 S-adenosyl-L-methionine = (sulfur carrier)-H + biotin + 2 5'-deoxyadenosine + 2 L-methionine + 2 oxidized [2Fe-2S]-[ferredoxin]. It functions in the pathway cofactor biosynthesis; biotin biosynthesis; biotin from 7,8-diaminononanoate: step 2/2. Its function is as follows. Catalyzes the conversion of dethiobiotin (DTB) to biotin by the insertion of a sulfur atom into dethiobiotin via a radical-based mechanism. This Klebsiella pneumoniae (strain 342) protein is Biotin synthase.